A 148-amino-acid polypeptide reads, in one-letter code: Ribosome maturation factor RimP (148 aa).

The protein belongs to the RimP family.

It localises to the cytoplasm. Required for maturation of 30S ribosomal subunits. The chain is Ribosome maturation factor RimP from Nautilia profundicola (strain ATCC BAA-1463 / DSM 18972 / AmH).